Reading from the N-terminus, the 350-residue chain is MIKRYPTRKIKVGNVDVGGDAPISVQSMTYSKTKDIESTLDQINRLYFAGADIVRVAVLDEEDALALKEIKQKSPLPVIADIHFNYRLGLKAAEVVDGLRINPGNIGGKERVKAIVDACKARKIPIRIGVNAGSLEDHLENKYGQTPKAMVESALWHIKFLEDLDFFDIKVSLKASDVQRTVEAYRMLRPLVDYPFHLGVTEAGTKFHATIKSAAAFGALLLDGIGDTMRVSITGELEEEIKVGKAILKDLGLSKEGVNIISCPTCGRIEVDLPPIVEAVEEATKHIKKPLNLAVMGCVVNAIGEAKEADVAIACGKGYGLIIKKGEIIGKYKEEELLEKFLEEVKKESE.

Positions 263, 266, 298, and 305 each coordinate [4Fe-4S] cluster.

Belongs to the IspG family. The cofactor is [4Fe-4S] cluster.

The catalysed reaction is (2E)-4-hydroxy-3-methylbut-2-enyl diphosphate + oxidized [flavodoxin] + H2O + 2 H(+) = 2-C-methyl-D-erythritol 2,4-cyclic diphosphate + reduced [flavodoxin]. Its pathway is isoprenoid biosynthesis; isopentenyl diphosphate biosynthesis via DXP pathway; isopentenyl diphosphate from 1-deoxy-D-xylulose 5-phosphate: step 5/6. In terms of biological role, converts 2C-methyl-D-erythritol 2,4-cyclodiphosphate (ME-2,4cPP) into 1-hydroxy-2-methyl-2-(E)-butenyl 4-diphosphate. The protein is 4-hydroxy-3-methylbut-2-en-1-yl diphosphate synthase (flavodoxin) of Nautilia profundicola (strain ATCC BAA-1463 / DSM 18972 / AmH).